A 151-amino-acid chain; its full sequence is Small ribosomal subunit protein uS15 (151 aa).

Residues 1–11 are compositionally biased toward basic residues; the sequence is MPHRSRHKKGR. The interval 1–24 is disordered; that stretch reads MPHRSRHKKGRSSSVRPPHPTVPT.

Belongs to the universal ribosomal protein uS15 family. Part of the 30S ribosomal subunit.

The chain is Small ribosomal subunit protein uS15 from Pyrobaculum calidifontis (strain DSM 21063 / JCM 11548 / VA1).